A 232-amino-acid polypeptide reads, in one-letter code: Large ribosomal subunit protein uL1 (232 aa).

Belongs to the universal ribosomal protein uL1 family. In terms of assembly, part of the 50S ribosomal subunit.

Binds directly to 23S rRNA. The L1 stalk is quite mobile in the ribosome, and is involved in E site tRNA release. Its function is as follows. Protein L1 is also a translational repressor protein, it controls the translation of the L11 operon by binding to its mRNA. This is Large ribosomal subunit protein uL1 from Cereibacter sphaeroides (strain ATCC 17025 / ATH 2.4.3) (Rhodobacter sphaeroides).